The primary structure comprises 132 residues: ATP synthase epsilon chain (132 aa).

Belongs to the ATPase epsilon chain family. As to quaternary structure, F-type ATPases have 2 components, CF(1) - the catalytic core - and CF(0) - the membrane proton channel. CF(1) has five subunits: alpha(3), beta(3), gamma(1), delta(1), epsilon(1). CF(0) has three main subunits: a, b and c.

The protein localises to the cell inner membrane. Functionally, produces ATP from ADP in the presence of a proton gradient across the membrane. The polypeptide is ATP synthase epsilon chain (Cereibacter sphaeroides (strain ATCC 17025 / ATH 2.4.3) (Rhodobacter sphaeroides)).